Here is a 42-residue protein sequence, read N- to C-terminus: Purine nucleoside phosphorylase DeoD-type (42 aa).

8 to 9 (SD) contributes to the a purine D-ribonucleoside binding site. Asp9 (proton donor) is an active-site residue.

This sequence belongs to the PNP/UDP phosphorylase family. As to quaternary structure, homohexamer; trimer of homodimers.

It catalyses the reaction a purine D-ribonucleoside + phosphate = a purine nucleobase + alpha-D-ribose 1-phosphate. The enzyme catalyses a purine 2'-deoxy-D-ribonucleoside + phosphate = a purine nucleobase + 2-deoxy-alpha-D-ribose 1-phosphate. Functionally, catalyzes the reversible phosphorolytic breakdown of the N-glycosidic bond in the beta-(deoxy)ribonucleoside molecules, with the formation of the corresponding free purine bases and pentose-1-phosphate. This is Purine nucleoside phosphorylase DeoD-type from Mycoplasmoides pirum (Mycoplasma pirum).